A 757-amino-acid polypeptide reads, in one-letter code: Two pore calcium channel protein 1 (757 aa).

Over 1 to 94 (MRERGEMREA…NDTRFERAMR (94 aa)) the chain is Cytoplasmic. The tract at residues 24–48 (HSHGSGSSGTGSHTSGGGGGWRGSR) is disordered. Gly residues predominate over residues 29-45 (GSSGTGSHTSGGGGGWR). The chain crosses the membrane as a helical span at residues 95–115 (FYFVYLRLDWLWSLNLFALIL). The Extracellular portion of the chain corresponds to 116–152 (LNFLEKPLWCRGYSQHACDQRDLYFLGQLPYLSKTES). Residues 153–173 (LIYEGLTLVILVMDIFYPLSY) form a helical membrane-spanning segment. The Cytoplasmic segment spans residues 174 to 188 (EGLNLFWKNTINKLK). Residues 189-209 (VLLLFILACDILVFAFSPQPF) traverse the membrane as a helical segment. A topological domain (extracellular) is located at residue R210. A helical; Voltage-sensor transmembrane segment spans residues 211–228 (VAPYIRVAFLIMNIRELR). Over 229–233 (MCAVT) the chain is Cytoplasmic. A helical membrane pass occupies residues 234–254 (LVGMVGTYLNVLALSLLFLLF). Residues 255–270 (ASWLAYVTFEDTPQGK) are Extracellular-facing. The segment at residues 271–285 (TVFSSYGTTLYQMFI) is an intramembrane region (pore-forming). Over 286–308 (LFTTSNNPDVWVPAYKSSRWSSL) the chain is Extracellular. A helical membrane pass occupies residues 309–329 (FFIVYVLLGVYFLTNLILAVI). The Cytoplasmic portion of the chain corresponds to 330–453 (YDSFKEQLAK…LCEWLKSFVR (124 aa)). EF-hand domains are found at residues 347 to 382 (TRKS…LNKY) and 388 to 423 (TSRE…IAIK). The helical transmembrane segment at 454–474 (SPLFEYIVIFVLLMNLVAVII) threads the bilayer. Residues 475 to 493 (ETTLDIENSSSQKVWQEVE) lie on the Extracellular side of the membrane. N482 carries N-linked (GlcNAc...) asparagine glycosylation. A helical membrane pass occupies residues 494–514 (FVFGWIYVIEMALKIFSLGFG). The Cytoplasmic segment spans residues 515–523 (AYWMEGQNK). A helical transmembrane segment spans residues 524–544 (FDFVLTWTIFIGETLTFAFPS). Residues 545-553 (KLSFLSNGE) are Extracellular-facing. Residues 554-571 (WIRYLLLGRMLRLTRILL) form a helical; Voltage-sensor membrane-spanning segment. Residues 572–595 (QVRRFRAFVATFFTLMSSLMPYLG) lie on the Cytoplasmic side of the membrane. The chain crosses the membrane as a helical span at residues 596–616 (IVFCTLCIYCSLGLQIFGGIV). Residues 617–640 (YAGNPTLEETDLFSNDYLLFNFND) lie on the Extracellular side of the membrane. Positions 641–655 (YPSGMVTLFNLLVMG) form an intramembrane region, pore-forming. The Extracellular portion of the chain corresponds to 656–676 (NWQAWMESYRQLTGSYWSLIY). The helical transmembrane segment at 677 to 697 (FVSFYLISVLLLLNLIVAFVL) threads the bilayer. The Cytoplasmic segment spans residues 698 to 757 (EAFFAEMELEKDGEADIQDPTLEGRNRRRSVRVRTKGTMVDILLHHMLSNELDGSQNRDQ).

The protein belongs to the calcium channel alpha-1 subunit (TC 1.A.1.11) family. Two pore calcium channel subfamily. As to quaternary structure, homodimer. In terms of tissue distribution, expressed in shoot, mature leaf, cultured cells, and at lower level in roots.

Its subcellular location is the membrane. Its activity is regulated as follows. Inhibited by the VDCC blocker verapamil in yeast cells. Channel activity may be down-regulated by cytosolic Ca(2+) in rice cells. Inhibited by Al(3+). In terms of biological role, may function as one of the major voltage-gated Ca(2+) channel (VDCC) across the plasma membrane. May be involved in the regulation of cytosolic Ca(2+) and in growth and development. Acts as the major ROS-responsive Ca(2+) channel and is the possible target of Al-dependent inhibition. Determines sensitivity to T.viride xylanase elicitor. Plays a regulatory role in elicitor-induced defense responses and hypersensitive cell death. This chain is Two pore calcium channel protein 1 (TPC1), found in Oryza sativa subsp. japonica (Rice).